The sequence spans 274 residues: Diaminopimelate epimerase (274 aa).

The substrate site is built by Asn11, Gln44, and Asn64. Cys73 (proton donor) is an active-site residue. Substrate contacts are provided by residues 74-75 (GN), Asn157, Asn190, and 208-209 (ER). Cys217 serves as the catalytic Proton acceptor. 218–219 (GS) lines the substrate pocket.

This sequence belongs to the diaminopimelate epimerase family. Homodimer.

Its subcellular location is the cytoplasm. The catalysed reaction is (2S,6S)-2,6-diaminopimelate = meso-2,6-diaminopimelate. It participates in amino-acid biosynthesis; L-lysine biosynthesis via DAP pathway; DL-2,6-diaminopimelate from LL-2,6-diaminopimelate: step 1/1. Functionally, catalyzes the stereoinversion of LL-2,6-diaminopimelate (L,L-DAP) to meso-diaminopimelate (meso-DAP), a precursor of L-lysine and an essential component of the bacterial peptidoglycan. The sequence is that of Diaminopimelate epimerase from Histophilus somni (strain 129Pt) (Haemophilus somnus).